A 427-amino-acid polypeptide reads, in one-letter code: Glutamate-1-semialdehyde 2,1-aminomutase (427 aa).

Position 265 is an N6-(pyridoxal phosphate)lysine (K265).

The protein belongs to the class-III pyridoxal-phosphate-dependent aminotransferase family. HemL subfamily. Homodimer. Pyridoxal 5'-phosphate serves as cofactor.

The protein localises to the cytoplasm. The catalysed reaction is (S)-4-amino-5-oxopentanoate = 5-aminolevulinate. It functions in the pathway porphyrin-containing compound metabolism; protoporphyrin-IX biosynthesis; 5-aminolevulinate from L-glutamyl-tRNA(Glu): step 2/2. The chain is Glutamate-1-semialdehyde 2,1-aminomutase from Idiomarina loihiensis (strain ATCC BAA-735 / DSM 15497 / L2-TR).